Reading from the N-terminus, the 165-residue chain is Glucosamine 6-phosphate N-acetyltransferase 1 (165 aa).

Residues 22–165 (YRIRPLELAD…EKNVQMGLYF (144 aa)) enclose the N-acetyltransferase domain. Residues Ser44, 92-95 (KFIR), and 104-106 (EDV) each bind substrate. An acetyl-CoA-binding site is contributed by 114-119 (GRGLGE). 135 to 136 (YK) lines the substrate pocket. 149–151 (YAK) is an acetyl-CoA binding site.

It belongs to the acetyltransferase family. GNA1 subfamily. In terms of assembly, homodimer. In terms of tissue distribution, highly expressed in the root elongation zone and at lower levels in leaves and grains.

Its subcellular location is the endoplasmic reticulum membrane. The enzyme catalyses D-glucosamine 6-phosphate + acetyl-CoA = N-acetyl-D-glucosamine 6-phosphate + CoA + H(+). Its pathway is nucleotide-sugar biosynthesis; UDP-N-acetyl-alpha-D-glucosamine biosynthesis; N-acetyl-alpha-D-glucosamine 1-phosphate from alpha-D-glucosamine 6-phosphate (route I): step 1/2. Its function is as follows. Acetyltransferase involved in de novo biosynthesis of UDP-N-acetylglucosamine (UDP-GlcNAc) in roots and is required for maintaining normal root cell shape. UDP-GlcNAc is an essential metabolite that serves as an initial sugar donor for N-glycan synthesis and thus plays an important role in protein and lipid glycosylation. The protein is Glucosamine 6-phosphate N-acetyltransferase 1 (GNA1) of Oryza sativa subsp. japonica (Rice).